Here is a 202-residue protein sequence, read N- to C-terminus: Ribonuclease HII (202 aa).

The RNase H type-2 domain occupies 14 to 202 (LPLAGVDEAG…VAQFSLFPAA (189 aa)). A divalent metal cation is bound by residues Asp20, Glu21, and Asp111.

It belongs to the RNase HII family. The cofactor is Mn(2+). It depends on Mg(2+) as a cofactor.

The protein localises to the cytoplasm. It catalyses the reaction Endonucleolytic cleavage to 5'-phosphomonoester.. Endonuclease that specifically degrades the RNA of RNA-DNA hybrids. The chain is Ribonuclease HII from Rhizorhabdus wittichii (strain DSM 6014 / CCUG 31198 / JCM 15750 / NBRC 105917 / EY 4224 / RW1) (Sphingomonas wittichii).